The chain runs to 515 residues: Fatty acyl-CoA reductase 1 (515 aa).

The Cytoplasmic segment spans residues 1–465 (MVSIPEYYEG…ARKHLNKLRN (465 aa)). A helical transmembrane segment spans residues 466-483 (IRYGFNTILVILIWRIFI). The Peroxisomal portion of the chain corresponds to 484–515 (ARSQMARNIWYFVVSLCYKFLSYFRASSTMRY).

Belongs to the fatty acyl-CoA reductase family.

The protein resides in the peroxisome membrane. The enzyme catalyses a long-chain fatty acyl-CoA + 2 NADPH + 2 H(+) = a long-chain primary fatty alcohol + 2 NADP(+) + CoA. It catalyses the reaction hexadecanoyl-CoA + 2 NADPH + 2 H(+) = hexadecan-1-ol + 2 NADP(+) + CoA. It carries out the reaction octadecanoyl-CoA + 2 NADPH + 2 H(+) = octadecan-1-ol + 2 NADP(+) + CoA. The catalysed reaction is (9Z)-octadecenoyl-CoA + 2 NADPH + 2 H(+) = (9Z)-octadecen-1-ol + 2 NADP(+) + CoA. The enzyme catalyses (9Z,12Z)-octadecadienoyl-CoA + 2 NADPH + 2 H(+) = (9Z,12Z)-octadecadien-1-ol + 2 NADP(+) + CoA. It catalyses the reaction eicosanoyl-CoA + 2 NADPH + 2 H(+) = eicosan-1-ol + 2 NADP(+) + CoA. It carries out the reaction 16-methylheptadecanoyl-CoA + 2 NADPH + 2 H(+) = 16-methylheptadecan-1-ol + 2 NADP(+) + CoA. The catalysed reaction is 18-methylnonadecanoyl-CoA + 2 NADPH + 2 H(+) = 18-methylnonadecan-1-ol + 2 NADP(+) + CoA. Functionally, catalyzes the reduction of saturated and unsaturated C16 or C18 fatty acyl-CoA to fatty alcohols. It plays an essential role in the production of ether lipids/plasmalogens which synthesis requires fatty alcohols. In parallel, it is also required for wax monoesters production since fatty alcohols also constitute a substrate for their synthesis. The sequence is that of Fatty acyl-CoA reductase 1 from Gallus gallus (Chicken).